Here is a 562-residue protein sequence, read N- to C-terminus: Alpha-1D adrenergic receptor (562 aa).

Topologically, residues 1–90 (MTFRDILSVT…VGGLVVSAQG (90 aa)) are extracellular. Disordered regions lie at residues 13–44 (GPRA…GVPG) and 50–69 (AVVG…EAGA). Residues 21–44 (GGSGAGGGAGTVGPEGPAVGGVPG) show a composition bias toward gly residues. 2 N-linked (GlcNAc...) asparagine glycosylation sites follow: Asn60 and Asn76. Residues 91 to 115 (VGVGVFLAAFILTAVAGNLLVILSV) traverse the membrane as a helical segment. Topologically, residues 116-127 (ACNRHLQTVTNY) are cytoplasmic. The helical transmembrane segment at 128 to 153 (FIVNLAVADLLLSAAVLPFSATMEVL) threads the bilayer. The Extracellular portion of the chain corresponds to 154–163 (GFWPFGRTFC). A helical membrane pass occupies residues 164–186 (DVWAAVDVLCCTASILSLCTISV). At 187–207 (DRYVGVRHSLKYPAIMTERKA) the chain is on the cytoplasmic side. The chain crosses the membrane as a helical span at residues 208 to 232 (AAILALLWAVALVVSVGPLLGWKEP). The Extracellular segment spans residues 233-245 (VPPDERFCGITEE). A helical transmembrane segment spans residues 246–269 (VGYAIFSSVCSFYLPMAVIVVMYC). Residues 270 to 342 (RVYVVARSTT…KFSREKKAAK (73 aa)) lie on the Cytoplasmic side of the membrane. Residues 343–367 (TLAIVVGVFVLCWFPFFFVLPLGSL) traverse the membrane as a helical segment. Topologically, residues 368–374 (FPQLKPS) are extracellular. Residues 375–399 (EGVFKVIFWLGYFNSCVNPLIYPCS) form a helical membrane-spanning segment. At 400 to 562 (SREFKRAFLR…DLSNLRETDI (163 aa)) the chain is on the cytoplasmic side. Cys413 is lipidated: S-palmitoyl cysteine. Positions 444–472 (QPAHRTPRGSPSPHCTPRPGLRRHAGGAG) are disordered.

It belongs to the G-protein coupled receptor 1 family. Adrenergic receptor subfamily. ADRA1D sub-subfamily. As to quaternary structure, interacts with FLNA (via filamin repeat 21); increases PKA-mediated phosphorylation of FLNA. Palmitoylated. Palmitoylation by ZDHHC21 may increase the expression of the receptor and regulate downstream signaling.

Its subcellular location is the cell membrane. Functionally, this alpha-adrenergic receptor mediates its effect through the influx of extracellular calcium. The sequence is that of Alpha-1D adrenergic receptor (Adra1d) from Mus musculus (Mouse).